Consider the following 463-residue polypeptide: Immune-associated nucleotide-binding protein 10 (463 aa).

Residues E3–K211 form the AIG1-type G domain. Residues G12–S19 are G1. Residues G12 to S20 and S33 each bind GTP. Residues G39–I43 are G2. The interval D61–G64 is G3. The interval T131 to D134 is G4. The tract at residues D170–K172 is G5. N171 serves as a coordination point for GTP. Positions S173–M308 form a coiled coil.

It belongs to the TRAFAC class TrmE-Era-EngA-EngB-Septin-like GTPase superfamily. AIG1/Toc34/Toc159-like paraseptin GTPase family. IAN subfamily. Expressed in radicles of the germinating seeds.

This Arabidopsis thaliana (Mouse-ear cress) protein is Immune-associated nucleotide-binding protein 10.